The chain runs to 347 residues: Quinolinate synthase (347 aa).

His-47 and Ser-68 together coordinate iminosuccinate. Residue Cys-113 coordinates [4Fe-4S] cluster. Residues 139-141 and Ser-156 contribute to the iminosuccinate site; that span reads YAN. Cys-200 contributes to the [4Fe-4S] cluster binding site. Iminosuccinate is bound by residues 226 to 228 and Thr-243; that span reads HPE. Cys-297 contacts [4Fe-4S] cluster.

This sequence belongs to the quinolinate synthase family. Type 1 subfamily. [4Fe-4S] cluster serves as cofactor.

It is found in the cytoplasm. The catalysed reaction is iminosuccinate + dihydroxyacetone phosphate = quinolinate + phosphate + 2 H2O + H(+). It functions in the pathway cofactor biosynthesis; NAD(+) biosynthesis; quinolinate from iminoaspartate: step 1/1. In terms of biological role, catalyzes the condensation of iminoaspartate with dihydroxyacetone phosphate to form quinolinate. The protein is Quinolinate synthase of Escherichia coli O9:H4 (strain HS).